A 428-amino-acid chain; its full sequence is MARSLCPGAWLRKPYYLQARFSYVRMKYLFFSWLVVFVGSWIIYVQYSTYTELCRGKDCKKIICDKYKTGVIDGPACNSLCVTETLYFGKCLSTKPNNQMYLGIWDNLPGVVKCQMEQALHLDFGTELEPRKEIVLFDKPTRGTTVQKFKEMVYSLFKAKLGDQGNLSELVNLILTVADGDKDGQVSLGEAKSAWALLQLNEFLLMVILQDKEHTPKLMGFCGDLYVMESVEYTSLYGISLPWVIELFIPSGFRRSMDQLFTPSWPRKAKIAIGLLEFVEDVFHGPYGNFLMCDTSAKNLGYNDKYDLKMVDMRKIVPETNLKELIKDRHCESDLDCVYGTDCRTSCDQSTMKCTSEVIQPNLAKACQLLKDYLLRGAPSEIREELEKQLYSCIALKVTANQMEMEHSLILNNLKTLLWKKISYTNDS.

At 1-27 the chain is on the cytoplasmic side; it reads MARSLCPGAWLRKPYYLQARFSYVRMK. A helical transmembrane segment spans residues 28 to 48; that stretch reads YLFFSWLVVFVGSWIIYVQYS. Residues 49–428 are Lumenal-facing; the sequence is TYTELCRGKD…WKKISYTNDS (380 aa).

It belongs to the DIPK family. Among the many cysteines in the lumenal domain, most are probably involved in disulfide bonds.

It localises to the endoplasmic reticulum membrane. The sequence is that of Divergent protein kinase domain 1A from Homo sapiens (Human).